Reading from the N-terminus, the 411-residue chain is Pyridinium-3,5-bisthiocarboxylic acid mononucleotide nickel insertion protein (411 aa).

This sequence belongs to the LarC family.

It carries out the reaction Ni(II)-pyridinium-3,5-bisthiocarboxylate mononucleotide = pyridinium-3,5-bisthiocarboxylate mononucleotide + Ni(2+). Functionally, involved in the biosynthesis of a nickel-pincer cofactor ((SCS)Ni(II) pincer complex). Binds Ni(2+), and functions in nickel delivery to pyridinium-3,5-bisthiocarboxylic acid mononucleotide (P2TMN), to form the mature cofactor. Is thus probably required for the activation of nickel-pincer cofactor-dependent enzymes. The sequence is that of Pyridinium-3,5-bisthiocarboxylic acid mononucleotide nickel insertion protein from Geobacillus kaustophilus (strain HTA426).